We begin with the raw amino-acid sequence, 317 residues long: Acetyl-coenzyme A carboxylase carboxyl transferase subunit alpha (317 aa).

One can recognise a CoA carboxyltransferase C-terminal domain in the interval 31-292 (RFEPELAQLE…DKALWATLTS (262 aa)).

This sequence belongs to the AccA family. Acetyl-CoA carboxylase is a heterohexamer composed of biotin carboxyl carrier protein (AccB), biotin carboxylase (AccC) and two subunits each of ACCase subunit alpha (AccA) and ACCase subunit beta (AccD).

The protein resides in the cytoplasm. The enzyme catalyses N(6)-carboxybiotinyl-L-lysyl-[protein] + acetyl-CoA = N(6)-biotinyl-L-lysyl-[protein] + malonyl-CoA. It functions in the pathway lipid metabolism; malonyl-CoA biosynthesis; malonyl-CoA from acetyl-CoA: step 1/1. Component of the acetyl coenzyme A carboxylase (ACC) complex. First, biotin carboxylase catalyzes the carboxylation of biotin on its carrier protein (BCCP) and then the CO(2) group is transferred by the carboxyltransferase to acetyl-CoA to form malonyl-CoA. In Sorangium cellulosum (strain So ce56) (Polyangium cellulosum (strain So ce56)), this protein is Acetyl-coenzyme A carboxylase carboxyl transferase subunit alpha.